The following is a 559-amino-acid chain: 5'-AMP-activated protein kinase catalytic subunit alpha-1 (559 aa).

A Protein kinase domain is found at 27–279 (YILGDTLGVG…IKDIREHEWF (253 aa)). A Phosphothreonine modification is found at T32. ATP is bound by residues 33-41 (LGVGTFGKV) and K56. The Proton acceptor role is filled by D150. At T183 the chain carries Phosphothreonine; by LKB1 and CaMKK2. The tract at residues 302–381 (EALKEVCEKF…PERVPFLVAE (80 aa)) is AIS. Position 355 is a phosphothreonine (T355). S356 is modified (phosphoserine). Phosphoserine; by ULK1 is present on S360. The residue at position 368 (T368) is a Phosphothreonine; by ULK1. Phosphothreonine is present on T382. A Phosphoserine; by ULK1 modification is found at S397. Phosphoserine occurs at positions 467 and 486. Residues 485-505 (KSGTATPQRSGSISNYRSCQR) are compositionally biased toward polar residues. The interval 485-536 (KSGTATPQRSGSISNYRSCQRSDSDAEAQGKPSDVSLTSSVTSLDSSPVDVA) is disordered. Residue T488 is modified to Phosphothreonine; by ULK1. T490 carries the post-translational modification Phosphothreonine. Phosphoserine is present on residues S496, S508, S524, and S527. A compositionally biased stretch (low complexity) spans 516 to 535 (PSDVSLTSSVTSLDSSPVDV).

Belongs to the protein kinase superfamily. CAMK Ser/Thr protein kinase family. SNF1 subfamily. In terms of assembly, AMPK is a heterotrimer of an alpha catalytic subunit (PRKAA1 or PRKAA2), a beta (PRKAB1 or PRKAB2) and a gamma non-catalytic subunits (PRKAG1, PRKAG2 or PRKAG3). Interacts with FNIP1 and FNIP2. Mg(2+) is required as a cofactor. Phosphorylated at Thr-183 by STK11/LKB1 in complex with STE20-related adapter-alpha (STRADA) pseudo kinase and CAB39. Also phosphorylated at Thr-183 by CAMKK2; triggered by a rise in intracellular calcium ions, without detectable changes in the AMP/ATP ratio. CAMKK1 can also phosphorylate Thr-183, but at a much lower level. Dephosphorylated by protein phosphatase 2A and 2C (PP2A and PP2C). Phosphorylated by ULK1 and ULK2; leading to negatively regulate AMPK activity and suggesting the existence of a regulatory feedback loop between ULK1, ULK2 and AMPK. Dephosphorylated by PPM1A and PPM1B. In terms of processing, ubiquitinated. Post-translationally, glycosylated; O-GlcNAcylated by OGT, promoting the AMP-activated protein kinase (AMPK) activity.

It is found in the cytoplasm. The protein localises to the nucleus. It carries out the reaction L-seryl-[protein] + ATP = O-phospho-L-seryl-[protein] + ADP + H(+). It catalyses the reaction L-threonyl-[protein] + ATP = O-phospho-L-threonyl-[protein] + ADP + H(+). The enzyme catalyses L-seryl-[acetyl-CoA carboxylase] + ATP = O-phospho-L-seryl-[acetyl-CoA carboxylase] + ADP + H(+). The catalysed reaction is L-seryl-[3-hydroxy-3-methylglutaryl-coenzyme A reductase] + ATP = O-phospho-L-seryl-[3-hydroxy-3-methylglutaryl-coenzyme A reductase] + ADP + H(+). It carries out the reaction L-seryl-[tau protein] + ATP = O-phospho-L-seryl-[tau protein] + ADP + H(+). It catalyses the reaction L-threonyl-[tau protein] + ATP = O-phospho-L-threonyl-[tau protein] + ADP + H(+). With respect to regulation, activated by phosphorylation on Thr-183. Binding of AMP to non-catalytic gamma subunit (PRKAG1, PRKAG2 or PRKAG3) results in allosteric activation, inducing phosphorylation on Thr-183. AMP-binding to gamma subunit also sustains activity by preventing dephosphorylation of Thr-183. ADP also stimulates Thr-183 phosphorylation, without stimulating already phosphorylated AMPK. ATP promotes dephosphorylation of Thr-183, rendering the enzyme inactive. Under physiological conditions AMPK mainly exists in its inactive form in complex with ATP, which is much more abundant than AMP. Selectively inhibited by compound C (6-[4-(2-Piperidin-1-yl-ethoxy)-phenyl)]-3-pyridin-4-yl-pyyrazolo[1,5-a] pyrimidine. Activated by resveratrol, a natural polyphenol present in red wine, and S17834, a synthetic polyphenol. Its function is as follows. Catalytic subunit of AMP-activated protein kinase (AMPK), an energy sensor protein kinase that plays a key role in regulating cellular energy metabolism. In response to reduction of intracellular ATP levels, AMPK activates energy-producing pathways and inhibits energy-consuming processes: inhibits protein, carbohydrate and lipid biosynthesis, as well as cell growth and proliferation. AMPK acts via direct phosphorylation of metabolic enzymes, and by longer-term effects via phosphorylation of transcription regulators. Regulates lipid synthesis by phosphorylating and inactivating lipid metabolic enzymes such as ACACA, ACACB, GYS1, HMGCR and LIPE; regulates fatty acid and cholesterol synthesis by phosphorylating acetyl-CoA carboxylase (ACACA and ACACB) and hormone-sensitive lipase (LIPE) enzymes, respectively. Promotes lipolysis of lipid droplets by mediating phosphorylation of isoform 1 of CHKA (CHKalpha2). Regulates insulin-signaling and glycolysis by phosphorylating IRS1, PFKFB2 and PFKFB3. AMPK stimulates glucose uptake in muscle by increasing the translocation of the glucose transporter SLC2A4/GLUT4 to the plasma membrane, possibly by mediating phosphorylation of TBC1D4/AS160. Regulates transcription and chromatin structure by phosphorylating transcription regulators involved in energy metabolism such as CRTC2/TORC2, FOXO3, histone H2B, HDAC5, MEF2C, MLXIPL/ChREBP, EP300, HNF4A, p53/TP53, SREBF1, SREBF2 and PPARGC1A. Acts as a key regulator of glucose homeostasis in liver by phosphorylating CRTC2/TORC2, leading to CRTC2/TORC2 sequestration in the cytoplasm. In response to stress, phosphorylates 'Ser-36' of histone H2B (H2BS36ph), leading to promote transcription. Acts as a key regulator of cell growth and proliferation by phosphorylating FNIP1, TSC2, RPTOR, WDR24 and ATG1/ULK1: in response to nutrient limitation, negatively regulates the mTORC1 complex by phosphorylating RPTOR component of the mTORC1 complex and by phosphorylating and activating TSC2. Also phosphorylates and inhibits GATOR2 subunit WDR24 in response to nutrient limitation, leading to suppress glucose-mediated mTORC1 activation. In response to energetic stress, phosphorylates FNIP1, inactivating the non-canonical mTORC1 signaling, thereby promoting nuclear translocation of TFEB and TFE3, and inducing transcription of lysosomal or autophagy genes. In response to nutrient limitation, promotes autophagy by phosphorylating and activating ATG1/ULK1. In that process, it also activates WDR45/WIPI4. Phosphorylates CASP6, thereby preventing its autoprocessing and subsequent activation. In response to nutrient limitation, phosphorylates transcription factor FOXO3 promoting FOXO3 mitochondrial import. Also acts as a regulator of cellular polarity by remodeling the actin cytoskeleton; probably by indirectly activating myosin. AMPK also acts as a regulator of circadian rhythm by mediating phosphorylation of CRY1, leading to destabilize it. May regulate the Wnt signaling pathway by phosphorylating CTNNB1, leading to stabilize it. Also has tau-protein kinase activity: in response to amyloid beta A4 protein (APP) exposure, activated by CAMKK2, leading to phosphorylation of MAPT/TAU; however the relevance of such data remains unclear in vivo. Also phosphorylates CFTR, EEF2K, KLC1, NOS3 and SLC12A1. Regulates hepatic lipogenesis. Activated via SIRT3, represses sterol regulatory element-binding protein (SREBP) transcriptional activities and ATP-consuming lipogenesis to restore cellular energy balance. Upon stress, regulates mitochondrial fragmentation through phosphorylation of MTFR1L. This Mus musculus (Mouse) protein is 5'-AMP-activated protein kinase catalytic subunit alpha-1 (Prkaa1).